Reading from the N-terminus, the 373-residue chain is Peroxisomal biogenesis factor 3 (373 aa).

At 1 to 15 the chain is on the cytoplasmic side; it reads MLRSVWNFLKRHKKK. Residues 1–45 form a targeting to peroxisomes region; the sequence is MLRSVWNFLKRHKKKCIFLGTVLGGVYILGKYGQKKIREIQEREA. Residues 16–36 form a helical membrane-spanning segment; sequence CIFLGTVLGGVYILGKYGQKK. Residues 37–116 lie on the Peroxisomal side of the membrane; that stretch reads IREIQEREAA…LKIISFTRST (80 aa). The chain crosses the membrane as a helical span at residues 117 to 140; sequence VAVYSTCMLVVLLRVQLNIIGGYI. Residues 120 to 136 are interaction with PEX19; that stretch reads YSTCMLVVLLRVQLNII. At 141–373 the chain is on the cytoplasmic side; that stretch reads YLDNAAVGKN…AFSTPQQLEK (233 aa).

This sequence belongs to the peroxin-3 family. As to quaternary structure, interacts with PEX19. As to expression, found in all examined tissues.

The protein resides in the peroxisome membrane. Functionally, involved in peroxisome biosynthesis and integrity. Assembles membrane vesicles before the matrix proteins are translocated. As a docking factor for PEX19, is necessary for the import of peroxisomal membrane proteins in the peroxisomes. The polypeptide is Peroxisomal biogenesis factor 3 (PEX3) (Homo sapiens (Human)).